Here is a 600-residue protein sequence, read N- to C-terminus: Arginine--tRNA ligase (600 aa).

Residues Pro123–His133 carry the 'HIGH' region motif.

Belongs to the class-I aminoacyl-tRNA synthetase family. Monomer.

The protein localises to the cytoplasm. It carries out the reaction tRNA(Arg) + L-arginine + ATP = L-arginyl-tRNA(Arg) + AMP + diphosphate. This chain is Arginine--tRNA ligase, found in Caulobacter vibrioides (strain NA1000 / CB15N) (Caulobacter crescentus).